The following is a 274-amino-acid chain: Diaminopimelate epimerase (274 aa).

N11 and N65 together coordinate substrate. C74 serves as the catalytic Proton donor. Residues 75 to 76 (GN), N158, N191, and 209 to 210 (ER) each bind substrate. Catalysis depends on C218, which acts as the Proton acceptor. Residue 219–220 (GT) coordinates substrate.

Belongs to the diaminopimelate epimerase family. As to quaternary structure, homodimer.

The protein localises to the cytoplasm. The catalysed reaction is (2S,6S)-2,6-diaminopimelate = meso-2,6-diaminopimelate. Its pathway is amino-acid biosynthesis; L-lysine biosynthesis via DAP pathway; DL-2,6-diaminopimelate from LL-2,6-diaminopimelate: step 1/1. Catalyzes the stereoinversion of LL-2,6-diaminopimelate (L,L-DAP) to meso-diaminopimelate (meso-DAP), a precursor of L-lysine and an essential component of the bacterial peptidoglycan. The protein is Diaminopimelate epimerase of Carboxydothermus hydrogenoformans (strain ATCC BAA-161 / DSM 6008 / Z-2901).